Reading from the N-terminus, the 283-residue chain is Bifunctional protein FolD (283 aa).

Residues 163–165, Ser-188, and Ile-229 contribute to the NADP(+) site; that span reads GRS.

The protein belongs to the tetrahydrofolate dehydrogenase/cyclohydrolase family. Homodimer.

The enzyme catalyses (6R)-5,10-methylene-5,6,7,8-tetrahydrofolate + NADP(+) = (6R)-5,10-methenyltetrahydrofolate + NADPH. It carries out the reaction (6R)-5,10-methenyltetrahydrofolate + H2O = (6R)-10-formyltetrahydrofolate + H(+). The protein operates within one-carbon metabolism; tetrahydrofolate interconversion. Catalyzes the oxidation of 5,10-methylenetetrahydrofolate to 5,10-methenyltetrahydrofolate and then the hydrolysis of 5,10-methenyltetrahydrofolate to 10-formyltetrahydrofolate. The protein is Bifunctional protein FolD of Campylobacter concisus (strain 13826).